The chain runs to 81 residues: Putative membrane protein insertion efficiency factor (81 aa).

This sequence belongs to the UPF0161 family.

Its subcellular location is the cell inner membrane. In terms of biological role, could be involved in insertion of integral membrane proteins into the membrane. The chain is Putative membrane protein insertion efficiency factor from Pseudomonas syringae pv. syringae (strain B728a).